Consider the following 211-residue polypeptide: Small ribosomal subunit protein uS5 (211 aa).

Residues 1–41 (MPGRERRDGGRSADDNKQNDRNERRGGGRRDDRRNQQQDER) are disordered. Positions 44–107 (YIERVVTINR…EEARKNFFRV (64 aa)) constitute an S5 DRBM domain.

It belongs to the universal ribosomal protein uS5 family. As to quaternary structure, part of the 30S ribosomal subunit. Contacts proteins S4 and S8.

In terms of biological role, with S4 and S12 plays an important role in translational accuracy. Its function is as follows. Located at the back of the 30S subunit body where it stabilizes the conformation of the head with respect to the body. The sequence is that of Small ribosomal subunit protein uS5 from Corynebacterium glutamicum (strain R).